We begin with the raw amino-acid sequence, 147 residues long: Protegrin-2 (147 aa).

The N-terminal stretch at 1 to 29 (METQRASLCLGRWSLWLLLLALVVPSASA) is a signal peptide. Positions 30–130 (QALSYREAVL…DITCNEVQGV (101 aa)) are excised as a propeptide. Residues 61 to 80 (DQPPKADEDPGTPKPVSFTV) are disordered. 4 disulfides stabilise this stretch: cysteine 85-cysteine 96, cysteine 107-cysteine 124, cysteine 136-cysteine 145, and cysteine 138-cysteine 143. Valine 146 bears the Valine amide mark.

The protein belongs to the cathelicidin family.

It localises to the secreted. In terms of biological role, microbicidal activity. Active against E.coli, Listeria monocytogenes and C.albicans, in vitro. The protein is Protegrin-2 (NPG2) of Sus scrofa (Pig).